Here is a 259-residue protein sequence, read N- to C-terminus: Tegument protein UL51 homolog (259 aa).

Residue cysteine 9 is the site of S-palmitoyl cysteine; by host attachment.

It belongs to the herpesviridae UL51 family. As to quaternary structure, oligomerizes. Interacts with ORF53; this interaction mediates ORF53 incorporation to virions. Phosphorylated. In terms of processing, palmitoylation is necessary for Golgi localization.

It is found in the virion tegument. The protein localises to the host cytoplasm. Its subcellular location is the host Golgi apparatus. Functionally, plays several roles during the time course of infection, including egress of virus particles from the perinuclear space and secondary envelopment of cytoplasmic capsids that bud into specific trans-Golgi network (TGN)-derived membranes. The polypeptide is Tegument protein UL51 homolog (Varicella-zoster virus (strain Dumas) (HHV-3)).